Here is a 378-residue protein sequence, read N- to C-terminus: Probable dihydroorotase-like protein (378 aa).

It belongs to the metallo-dependent hydrolases superfamily. DHOase family. PyrC' subfamily.

Functionally, non-functional DHOase. The sequence is that of Probable dihydroorotase-like protein (pyrC') from Helicobacter pylori (strain J99 / ATCC 700824) (Campylobacter pylori J99).